We begin with the raw amino-acid sequence, 394 residues long: Flavohemoprotein (394 aa).

The region spanning 1–136 (MLSENTINIV…LANVFIQREE (136 aa)) is the Globin domain. His-85 contacts heme b. Catalysis depends on charge relay system residues Tyr-95 and Glu-135. A reductase region spans residues 147 to 394 (GGWRGLREFE…YECFGPHKVV (248 aa)). Positions 150–255 (RGLREFELVE…AAPAGDFFLD (106 aa)) constitute an FAD-binding FR-type domain. Residues Tyr-188 and 204–207 (RQYS) contribute to the FAD site. Residue 268-273 (GVGLTP) coordinates NADP(+). 387-390 (CFGP) provides a ligand contact to FAD.

It belongs to the globin family. Two-domain flavohemoproteins subfamily. In the C-terminal section; belongs to the flavoprotein pyridine nucleotide cytochrome reductase family. Heme b is required as a cofactor. Requires FAD as cofactor.

It catalyses the reaction 2 nitric oxide + NADPH + 2 O2 = 2 nitrate + NADP(+) + H(+). It carries out the reaction 2 nitric oxide + NADH + 2 O2 = 2 nitrate + NAD(+) + H(+). Functionally, is involved in NO detoxification in an aerobic process, termed nitric oxide dioxygenase (NOD) reaction that utilizes O(2) and NAD(P)H to convert NO to nitrate, which protects the bacterium from various noxious nitrogen compounds. Therefore, plays a central role in the inducible response to nitrosative stress. This Vibrio vulnificus (strain YJ016) protein is Flavohemoprotein.